The following is a 78-amino-acid chain: D-alanyl carrier protein (78 aa).

The 78-residue stretch at 1–78 (MNIQETVLNI…QIIQQVEALQ (78 aa)) folds into the Carrier domain. Ser-36 is subject to O-(pantetheine 4'-phosphoryl)serine.

The protein belongs to the DltC family. In terms of processing, 4'-phosphopantetheine is transferred from CoA to a specific serine of apo-DCP.

The protein localises to the cytoplasm. It functions in the pathway cell wall biogenesis; lipoteichoic acid biosynthesis. Functionally, carrier protein involved in the D-alanylation of lipoteichoic acid (LTA). The loading of thioester-linked D-alanine onto DltC is catalyzed by D-alanine--D-alanyl carrier protein ligase DltA. The DltC-carried D-alanyl group is further transferred to cell membrane phosphatidylglycerol (PG) by forming an ester bond, probably catalyzed by DltD. D-alanylation of LTA plays an important role in modulating the properties of the cell wall in Gram-positive bacteria, influencing the net charge of the cell wall. This is D-alanyl carrier protein from Enterococcus faecalis (strain ATCC 700802 / V583).